Reading from the N-terminus, the 498-residue chain is Probable cytosol aminopeptidase (498 aa).

Residues Lys271 and Asp276 each contribute to the Mn(2+) site. Lys283 is a catalytic residue. Positions 294, 353, and 355 each coordinate Mn(2+). Residue Arg357 is part of the active site.

It belongs to the peptidase M17 family. Mn(2+) is required as a cofactor.

The protein resides in the cytoplasm. The enzyme catalyses Release of an N-terminal amino acid, Xaa-|-Yaa-, in which Xaa is preferably Leu, but may be other amino acids including Pro although not Arg or Lys, and Yaa may be Pro. Amino acid amides and methyl esters are also readily hydrolyzed, but rates on arylamides are exceedingly low.. It catalyses the reaction Release of an N-terminal amino acid, preferentially leucine, but not glutamic or aspartic acids.. In terms of biological role, presumably involved in the processing and regular turnover of intracellular proteins. Catalyzes the removal of unsubstituted N-terminal amino acids from various peptides. The chain is Probable cytosol aminopeptidase from Bordetella petrii (strain ATCC BAA-461 / DSM 12804 / CCUG 43448).